The primary structure comprises 1177 residues: Dynein axonemal assembly factor 9 (1177 aa).

The tract at residues 1-27 (MDVYPPRRQGLPRARSPGGSSRGSPSV) is disordered. A compositionally biased stretch (low complexity) spans 11–27 (LPRARSPGGSSRGSPSV).

Interacts with ARL3.

In terms of biological role, may act as an effector for ARL3. The protein is Dynein axonemal assembly factor 9 of Homo sapiens (Human).